Reading from the N-terminus, the 420-residue chain is Exodeoxyribonuclease 7 large subunit (420 aa).

This sequence belongs to the XseA family. In terms of assembly, heterooligomer composed of large and small subunits.

It is found in the cytoplasm. It carries out the reaction Exonucleolytic cleavage in either 5'- to 3'- or 3'- to 5'-direction to yield nucleoside 5'-phosphates.. Its function is as follows. Bidirectionally degrades single-stranded DNA into large acid-insoluble oligonucleotides, which are then degraded further into small acid-soluble oligonucleotides. The chain is Exodeoxyribonuclease 7 large subunit from Helicobacter pylori (strain G27).